Here is a 198-residue protein sequence, read N- to C-terminus: V-type ATP synthase subunit E (198 aa).

It belongs to the V-ATPase E subunit family.

Its function is as follows. Produces ATP from ADP in the presence of a proton gradient across the membrane. This chain is V-type ATP synthase subunit E, found in Clostridium perfringens (strain ATCC 13124 / DSM 756 / JCM 1290 / NCIMB 6125 / NCTC 8237 / Type A).